The chain runs to 302 residues: Sulfate adenylyltransferase subunit 2 (302 aa).

Residues R280–F302 form a disordered region.

It belongs to the PAPS reductase family. CysD subfamily. In terms of assembly, heterodimer composed of CysD, the smaller subunit, and CysN.

It catalyses the reaction sulfate + ATP + H(+) = adenosine 5'-phosphosulfate + diphosphate. It participates in sulfur metabolism; hydrogen sulfide biosynthesis; sulfite from sulfate: step 1/3. Functionally, with CysN forms the ATP sulfurylase (ATPS) that catalyzes the adenylation of sulfate producing adenosine 5'-phosphosulfate (APS) and diphosphate, the first enzymatic step in sulfur assimilation pathway. APS synthesis involves the formation of a high-energy phosphoric-sulfuric acid anhydride bond driven by GTP hydrolysis by CysN coupled to ATP hydrolysis by CysD. This is Sulfate adenylyltransferase subunit 2 from Hahella chejuensis (strain KCTC 2396).